Consider the following 92-residue polypeptide: UPF0223 protein SP_1404 (92 aa).

This sequence belongs to the UPF0223 family.

The chain is UPF0223 protein SP_1404 from Streptococcus pneumoniae serotype 4 (strain ATCC BAA-334 / TIGR4).